Here is a 617-residue protein sequence, read N- to C-terminus: MDFSKLPKILDEDKESTFGYVHGVSGPVVTACDMAGAAMYELVRVGHSELVGEIIRLEGDMATIQVYEETSGVSVGDPVLRTGKPLSVELGPGIMGAIFDGIQRPLSDISSQTQSIYIPRGVNVSALSRDIKWDFTPCKNLRVGSHITGGDIYGIVSENSLIKHKIMLPPRNRGTVTYIAPPGNYDTSDVVLELEFEGVKEKFTMVQVWPVRQVRPVTEKLPANHPLLTGQRVLDALFPCVQGGTTAIPGAFGCGKTVISQSLSKYSNSDVIIYVGCGERGNEMSEVLRDFPELTMEVDGKVESIMKRTALVANTSNMPVAAREASIYTGITLSEYFRDMGYHVSMMADSTSRWAEALREISGRLAEMPADSGYPAYLGARLASFYERAGRVKCLGNPEREGSVSIVGAVSPPGGDFSDPVTSATLGIVQVFWGLDKKLAQRKHFPSVNWLISYSKYMRALDEYYDKHFTEFVPLRTKAKEILQEEEDLAEIVQLVGKASLAETDKITLEVAKLIKDDFLQQNGYTPYDKFCPFYKTVGMLSNMIAFYDMARRAVETTAQSDNKITWSIIREHMGDILYKLSSMKFKDPLKDGEAKIKSDYAQLLEDMQNAFRSLED.

Residue T136 is modified to Phosphothreonine. 250–257 (GAFGCGKT) provides a ligand contact to ATP. S384 is modified (phosphoserine; by AMPK).

Belongs to the ATPase alpha/beta chains family. As to quaternary structure, V-ATPase is a heteromultimeric enzyme made up of two complexes: the ATP-hydrolytic V1 complex and the proton translocation V0 complex. The V1 complex consists of three catalytic AB heterodimers that form a heterohexamer, three peripheral stalks each consisting of EG heterodimers, one central rotor including subunits D and F, and the regulatory subunits C and H. The proton translocation complex V0 consists of the proton transport subunit a, a ring of proteolipid subunits c9c'', rotary subunit d, subunits e and f, and the accessory subunits ATP6AP1/Ac45 and ATP6AP2/PRR. Interacts with the V0 complex V-ATPase subunit a4 ATP6V0A4. Interacts with WFS1. Interacts with alpha-crystallin B chain/CRYAB and with MTOR, forming a ternary complex. Phosphorylation at Ser-384 by AMPK down-regulates its enzyme activity.

It localises to the cytoplasm. It is found in the cytosol. Its subcellular location is the cytoplasmic vesicle. The protein resides in the secretory vesicle. The protein localises to the clathrin-coated vesicle membrane. It localises to the lysosome. It catalyses the reaction ATP + H2O + 4 H(+)(in) = ADP + phosphate + 5 H(+)(out). ATP hydrolysis occurs at the interface between the nucleotide-binding domains of subunits A and B. ATP hydrolysis triggers a conformational change in the subunits D and F, which induces a shift of subunit d. The c-ring is subsequently rotated and results in a continuous proton translocation across the membrane. Its function is as follows. Catalytic subunit of the V1 complex of vacuolar(H+)-ATPase (V-ATPase), a multisubunit enzyme composed of a peripheral complex (V1) that hydrolyzes ATP and a membrane integral complex (V0) that translocates protons. V-ATPase is responsible for acidifying and maintaining the pH of intracellular compartments and in some cell types, is targeted to the plasma membrane, where it is responsible for acidifying the extracellular environment. In aerobic conditions, involved in intracellular iron homeostasis, thus triggering the activity of Fe(2+) prolyl hydroxylase (PHD) enzymes, and leading to HIF1A hydroxylation and subsequent proteasomal degradation. May play a role in neurite development and synaptic connectivity. In Pongo abelii (Sumatran orangutan), this protein is V-type proton ATPase catalytic subunit A (ATP6V1A).